Consider the following 253-residue polypeptide: MKTLISNSKKVLIPLIMGSIFAGNVMAAGPYAVELGEAGTFTILSKSGITDVYPSTVTGNVGTSPITGAALLLNCDEVTGAMYTVDSAGPLPCSINSPYLLELAVSDMGIAYNDAAGRVPADHTELGTGEIGGLTLEPGVYKWSSDVNISTDVTFNGTMDDVWIMQISGNLNQANAKRVTLTGGALAKNIFWQVAGYTALGTYASFEGIVLSKTLISVNTGTTVNGRLLAQTAVTLQKNTINAPTEQYEEAPL.

An N-terminal signal peptide occupies residues 1-27; it reads MKTLISNSKKVLIPLIMGSIFAGNVMA. The cysteines at positions 75 and 93 are disulfide-linked. Short sequence motifs (ice-binding site motif (T-A/G-X-T/N)) lie at residues 220-223 and 232-235; these read TGTT and TAVT.

Belongs to the ice-binding protein family.

Its subcellular location is the secreted. Binds to the surface of ice crystals and inhibits their growth. Has ice recrystallization inhibition (RI) activity (the ability to prevent the formation of larger grains of ice at the expense of smaller grains), which may protect membranes from freezing injury. Has high thermal hysteresis (TH) activity, which is the ability to lower the freezing point of an aqueous solution below its melting point, and thus the freezing of the cell fluid can be prevented protecting the organism from ice damage. The TH activity of this protein is 3.8 degrees Celsius at 14 mM. The chain is Ice-binding protein from Colwellia sp.